Reading from the N-terminus, the 513-residue chain is Sterol 14-alpha demethylase (513 aa).

The chain crosses the membrane as a helical span at residues A8 to F28. N-linked (GlcNAc...) asparagine glycans are attached at residues N32 and N332. C453 contributes to the heme binding site.

Belongs to the cytochrome P450 family. It depends on heme as a cofactor.

Its subcellular location is the endoplasmic reticulum membrane. The enzyme catalyses a 14alpha-methyl steroid + 3 reduced [NADPH--hemoprotein reductase] + 3 O2 = a Delta(14) steroid + formate + 3 oxidized [NADPH--hemoprotein reductase] + 4 H2O + 4 H(+). It carries out the reaction a 14alpha-methyl steroid + reduced [NADPH--hemoprotein reductase] + O2 = a 14alpha-hydroxymethyl steroid + oxidized [NADPH--hemoprotein reductase] + H2O + H(+). The catalysed reaction is a 14alpha-hydroxymethyl steroid + reduced [NADPH--hemoprotein reductase] + O2 = a 14alpha-formyl steroid + oxidized [NADPH--hemoprotein reductase] + 2 H2O + H(+). It catalyses the reaction a 14alpha-formyl steroid + reduced [NADPH--hemoprotein reductase] + O2 = a Delta(14) steroid + formate + oxidized [NADPH--hemoprotein reductase] + H2O + 2 H(+). The enzyme catalyses lanosterol + 3 reduced [NADPH--hemoprotein reductase] + 3 O2 = 4,4-dimethyl-5alpha-cholesta-8,14,24-trien-3beta-ol + formate + 3 oxidized [NADPH--hemoprotein reductase] + 4 H2O + 4 H(+). It carries out the reaction lanosterol + reduced [NADPH--hemoprotein reductase] + O2 = 32-hydroxylanosterol + oxidized [NADPH--hemoprotein reductase] + H2O + H(+). The catalysed reaction is 32-hydroxylanosterol + reduced [NADPH--hemoprotein reductase] + O2 = 32-oxolanosterol + oxidized [NADPH--hemoprotein reductase] + 2 H2O + H(+). It catalyses the reaction 32-oxolanosterol + reduced [NADPH--hemoprotein reductase] + O2 = 4,4-dimethyl-5alpha-cholesta-8,14,24-trien-3beta-ol + formate + oxidized [NADPH--hemoprotein reductase] + H2O + 2 H(+). The enzyme catalyses eburicol + 3 reduced [NADPH--hemoprotein reductase] + 3 O2 = 14-demethyleburicol + formate + 3 oxidized [NADPH--hemoprotein reductase] + 4 H2O + 4 H(+). It carries out the reaction eburicol + reduced [NADPH--hemoprotein reductase] + O2 = 32-hydroxyeburicol + oxidized [NADPH--hemoprotein reductase] + H2O + H(+). The catalysed reaction is 32-hydroxyeburicol + reduced [NADPH--hemoprotein reductase] + O2 = 32-oxoeburicol + oxidized [NADPH--hemoprotein reductase] + 2 H2O + H(+). It catalyses the reaction 32-oxoeburicol + reduced [NADPH--hemoprotein reductase] + O2 = 14-demethyleburicol + formate + oxidized [NADPH--hemoprotein reductase] + H2O + 2 H(+). The protein operates within steroid biosynthesis; sterol biosynthesis. Sterol 14alpha-demethylase, encoded by cyp51A, cyp51B and cyp51C, that plays a critical role in the third module of ergosterol biosynthesis pathway, being ergosterol the major sterol component in fungal membranes that participates in a variety of functions. The third module or late pathway involves the ergosterol synthesis itself through consecutive reactions that mainly occur in the endoplasmic reticulum (ER) membrane. In filamentous fungi, during the initial step of this module, lanosterol (lanosta-8,24-dien-3beta-ol) can be metabolized to eburicol. Sterol 14alpha-demethylase catalyzes the three-step oxidative removal of the 14alpha-methyl group (C-32) of both these sterols in the form of formate, and converts eburicol and lanosterol to 14-demethyleburicol (4,4,24-trimethylergosta-8,14,24(28)-trienol) and 4,4-dimethyl-5alpha-cholesta-8,14,24-trien-3beta-ol, respectively, which are further metabolized by other enzymes in the pathway to ergosterol. Can also use substrates not intrinsic to fungi, such as 24,25-dihydrolanosterol (DHL), producing 4,4'-dimethyl-8,14-cholestadien-3-beta-ol, but at lower rates than the endogenous substrates. In terms of biological role, as a target of azole drugs, plays a crucial role in azole drug susceptibility. The chain is Sterol 14-alpha demethylase from Aspergillus flavus (strain ATCC 200026 / FGSC A1120 / IAM 13836 / NRRL 3357 / JCM 12722 / SRRC 167).